We begin with the raw amino-acid sequence, 417 residues long: NADH-quinone oxidoreductase subunit D (417 aa).

It belongs to the complex I 49 kDa subunit family. In terms of assembly, NDH-1 is composed of 14 different subunits. Subunits NuoB, C, D, E, F, and G constitute the peripheral sector of the complex.

It is found in the cell inner membrane. It catalyses the reaction a quinone + NADH + 5 H(+)(in) = a quinol + NAD(+) + 4 H(+)(out). NDH-1 shuttles electrons from NADH, via FMN and iron-sulfur (Fe-S) centers, to quinones in the respiratory chain. The immediate electron acceptor for the enzyme in this species is believed to be ubiquinone. Couples the redox reaction to proton translocation (for every two electrons transferred, four hydrogen ions are translocated across the cytoplasmic membrane), and thus conserves the redox energy in a proton gradient. The polypeptide is NADH-quinone oxidoreductase subunit D (Burkholderia orbicola (strain MC0-3)).